Here is a 555-residue protein sequence, read N- to C-terminus: CTP synthase (555 aa).

Residues 1-271 (MVKRGKKTKY…DDKLAELFNI (271 aa)) form an amidoligase domain region. Residue Ser19 coordinates CTP. UTP is bound at residue Ser19. ATP contacts are provided by residues 20-25 (SLGKGL) and Asp77. Asp77 and Glu145 together coordinate Mg(2+). CTP-binding positions include 152 to 154 (DIE), 192 to 197 (KTKPTQ), and Lys228. UTP contacts are provided by residues 192–197 (KTKPTQ) and Lys228. Residues 297 to 537 (RIGIVGKYVE…VKAALEHRDA (241 aa)) enclose the Glutamine amidotransferase type-1 domain. Gly358 lines the L-glutamine pocket. Cys385 functions as the Nucleophile; for glutamine hydrolysis in the catalytic mechanism. L-glutamine is bound by residues 386-389 (LGLQ), Glu409, and Arg466. Catalysis depends on residues His510 and Glu512. Residues 535-555 (RDAQQRQPPAEVKKLAVGKNG) form a disordered region.

Belongs to the CTP synthase family. Homotetramer.

The catalysed reaction is UTP + L-glutamine + ATP + H2O = CTP + L-glutamate + ADP + phosphate + 2 H(+). It carries out the reaction L-glutamine + H2O = L-glutamate + NH4(+). It catalyses the reaction UTP + NH4(+) + ATP = CTP + ADP + phosphate + 2 H(+). It participates in pyrimidine metabolism; CTP biosynthesis via de novo pathway; CTP from UDP: step 2/2. Its activity is regulated as follows. Allosterically activated by GTP, when glutamine is the substrate; GTP has no effect on the reaction when ammonia is the substrate. The allosteric effector GTP functions by stabilizing the protein conformation that binds the tetrahedral intermediate(s) formed during glutamine hydrolysis. Inhibited by the product CTP, via allosteric rather than competitive inhibition. In terms of biological role, catalyzes the ATP-dependent amination of UTP to CTP with either L-glutamine or ammonia as the source of nitrogen. Regulates intracellular CTP levels through interactions with the four ribonucleotide triphosphates. This is CTP synthase from Anaeromyxobacter sp. (strain K).